An 83-amino-acid chain; its full sequence is Small ribosomal subunit protein bS16 (83 aa).

The protein belongs to the bacterial ribosomal protein bS16 family.

This is Small ribosomal subunit protein bS16 from Borrelia hermsii (strain HS1 / DAH).